We begin with the raw amino-acid sequence, 379 residues long: MAKRDYYEVLGISKDASKDEIKKAYRKLSKKYHPDINKEEGADEKFKEISEAYEVLSDDNKRASYDQFGHDGPQGFGGQGFNGSDFGGFSGFGGGGFEDIFSSFFGGGRQRDPNASQKGDDLQYTMTLTFEEAVFGTTKEISIRKDVTCETCHGDGAKPGTSKKTCSYCNGAGHVAVEQNTILGRVRTEQVCPKCNGSGQEFEEACPTCHGKGTENKTVKLEVKVPEGVDNEQQIRLAGEGSPGVNGGPAGDLYVVFRVKPSETFKRDGDDIYYKLNVSFPQAALGDEIKIPTLNNEVMLTIPAGTQTGKQFRLKEKGIKNVHGYGYGDLYVDIKVVTPTKLTDRQKELMKEFAQLNGEEINEQPSNFKDRAKRFFKGE.

The J domain occupies 5–69 (DYYEVLGISK…NKRASYDQFG (65 aa)). The CR-type zinc-finger motif lies at 136–218 (GTTKEISIRK…CHGKGTENKT (83 aa)). Zn(2+)-binding residues include Cys-149, Cys-152, Cys-166, Cys-169, Cys-192, Cys-195, Cys-206, and Cys-209. 4 CXXCXGXG motif repeats span residues 149-156 (CETCHGDG), 166-173 (CSYCNGAG), 192-199 (CPKCNGSG), and 206-213 (CPTCHGKG).

It belongs to the DnaJ family. As to quaternary structure, homodimer. Zn(2+) serves as cofactor.

The protein localises to the cytoplasm. Functionally, participates actively in the response to hyperosmotic and heat shock by preventing the aggregation of stress-denatured proteins and by disaggregating proteins, also in an autonomous, DnaK-independent fashion. Unfolded proteins bind initially to DnaJ; upon interaction with the DnaJ-bound protein, DnaK hydrolyzes its bound ATP, resulting in the formation of a stable complex. GrpE releases ADP from DnaK; ATP binding to DnaK triggers the release of the substrate protein, thus completing the reaction cycle. Several rounds of ATP-dependent interactions between DnaJ, DnaK and GrpE are required for fully efficient folding. Also involved, together with DnaK and GrpE, in the DNA replication of plasmids through activation of initiation proteins. The chain is Chaperone protein DnaJ from Staphylococcus aureus (strain bovine RF122 / ET3-1).